Here is a 145-residue protein sequence, read N- to C-terminus: Mitochondrial import receptor subunit TOM20 homolog (145 aa).

Residues 1–6 (MVGRNS) are Mitochondrial intermembrane-facing. The helical transmembrane segment at 7–24 (AIAAGVCGALFIGYCIYF) threads the bilayer. The Cytoplasmic portion of the chain corresponds to 25 to 145 (DRKRRSDPNF…AQSLAEDDVE (121 aa)). Residues lysine 35, lysine 56, lysine 61, and lysine 68 each participate in a glycyl lysine isopeptide (Lys-Gly) (interchain with G-Cter in ubiquitin) cross-link. Serine 135 and serine 138 each carry phosphoserine.

The protein belongs to the Tom20 family. In terms of assembly, forms part of the preprotein translocase complex of the outer mitochondrial membrane (TOM complex) which consists of at least 7 different proteins (TOMM5, TOMM6, TOMM7, TOMM20, TOMM22, TOMM40 and TOMM70). Interacts with TOM22. Interacts with APEX1. Interacts with TBC1D21. Upon mitochondrial depolarization, interacts with PINK1; the interaction is required for PINK1-TOM-TIM23 supercomplex formation which is critical for PINK1 stabilization at the outer mitochondrial membrane, kinase activation and downstream mitophagy. In terms of processing, ubiquitinated by PRKN during mitophagy, leading to its degradation and enhancement of mitophagy. Deubiquitinated by USP30.

It localises to the mitochondrion outer membrane. Central component of the receptor complex responsible for the recognition and translocation of cytosolically synthesized mitochondrial preproteins. Together with TOM22 functions as the transit peptide receptor at the surface of the mitochondrion outer membrane and facilitates the movement of preproteins into the TOM40 translocation pore. Required for the translocation across the mitochondrial outer membrane of cytochrome P450 monooxygenases. The sequence is that of Mitochondrial import receptor subunit TOM20 homolog (TOMM20) from Bos taurus (Bovine).